Here is a 90-residue protein sequence, read N- to C-terminus: RNA-binding protein Hfq (90 aa).

Positions 9-68 (DPFLNALRRERVPVSIYLVNGIKLQGQVESFDQFVILLKNTVSQMVYKHAISTVVPARPF) constitute a Sm domain. The interval 71–90 (TGHQNAQGGYGPQDDVPSGE) is disordered.

The protein belongs to the Hfq family. As to quaternary structure, homohexamer.

Functionally, RNA chaperone that binds small regulatory RNA (sRNAs) and mRNAs to facilitate mRNA translational regulation in response to envelope stress, environmental stress and changes in metabolite concentrations. Also binds with high specificity to tRNAs. The protein is RNA-binding protein Hfq of Shewanella putrefaciens (strain CN-32 / ATCC BAA-453).